The following is a 602-amino-acid chain: Sulfite reductase [NADPH] flavoprotein alpha-component (602 aa).

The 139-residue stretch at 68–206 folds into the Flavodoxin-like domain; the sequence is ITIISASQTG…NYIQWSEELL (139 aa). FMN contacts are provided by residues 74–79, 121–124, and 157–166; these read SQTGNA, STQG, and LGDVSYNLFC. The 215-residue stretch at 237 to 451 folds into the FAD-binding FR-type domain; it reads YKPAVATVLL…VEEKSNFRLP (215 aa). FAD-binding positions include T325, K359, 389-392, 407-409, and 422-425; these read RLYS, TVG, and GGSS. Residues 522–523, 528–532, and D564 contribute to the NADP(+) site; these read SR and KIYVQ. Residue Y602 coordinates FAD.

Belongs to the NADPH-dependent sulphite reductase flavoprotein subunit CysJ family. The protein in the N-terminal section; belongs to the flavodoxin family. It in the C-terminal section; belongs to the flavoprotein pyridine nucleotide cytochrome reductase family. In terms of assembly, alpha(8)-beta(8). The alpha component is a flavoprotein, the beta component is a hemoprotein. FAD is required as a cofactor. The cofactor is FMN.

The enzyme catalyses hydrogen sulfide + 3 NADP(+) + 3 H2O = sulfite + 3 NADPH + 4 H(+). Its pathway is sulfur metabolism; hydrogen sulfide biosynthesis; hydrogen sulfide from sulfite (NADPH route): step 1/1. In terms of biological role, component of the sulfite reductase complex that catalyzes the 6-electron reduction of sulfite to sulfide. This is one of several activities required for the biosynthesis of L-cysteine from sulfate. The flavoprotein component catalyzes the electron flow from NADPH -&gt; FAD -&gt; FMN to the hemoprotein component. The polypeptide is Sulfite reductase [NADPH] flavoprotein alpha-component (Buchnera aphidicola subsp. Schizaphis graminum (strain Sg)).